A 680-amino-acid polypeptide reads, in one-letter code: WD repeat-containing protein 48 homolog (680 aa).

WD repeat units follow at residues 26–65 (QHRN…SEKY), 71–110 (HHND…CMST), 113–152 (THRD…ALTA), 164–203 (GSKD…RIMK), 206–245 (GHTE…CVQT), 248–287 (VHKE…NKTL), 290–329 (EEQA…RCTL), and 350–389 (KGGA…KKEQ). Residues 592 to 616 (ETTPSGGNANNSLQNSQSDANSEGS) are disordered.

This sequence belongs to the WD repeat WDR48 family. In terms of assembly, catalytic component of the Usp12-46 deubiquitylase complex consisting of Usp12-46, Wdr20 and Uaf1; regulatory subunit that, together wtih Wdr20, stabilizes Usp12-46. The Usp12-46 deubiquitylase complex associates with arr/arrow; the interaction leads to deubiquitination and stabilization of arr/arrow.

Functionally, regulatory component of the Usp12-46 deubiquitylase complex. activates deubiquitination by increasing the catalytic turnover without increasing the affinity of deubiquitinating enzymes for the substrate. The complex deubiquitylates the wg/wingless-signaling receptor arr/arrow, which stabilizes the receptor and increases its concentration at the cell surface; this enhances the sensitivity of cells to wg/wingless-signal stimulation. This increases the amplitude and spatial range of the signaling response to the wg/wingless morphogen gradient, facilitating the precise concentration-dependent regulation of its target genes. Together with Wdr20 and Usp12-46 required for wg/wingless-mediated signaling in the wing imaginal disc and for wg/wingless-dependent regulation of intestinal stem cell proliferation. The sequence is that of WD repeat-containing protein 48 homolog from Drosophila sechellia (Fruit fly).